Consider the following 937-residue polypeptide: Periplasmic nitrate reductase (937 aa).

The segment at residues methionine 1 to alanine 31 is a signal peptide (tat-type signal). One can recognise a 4Fe-4S Mo/W bis-MGD-type domain in the interval tryptophan 40–aspartate 96. Residues cysteine 47, cysteine 50, cysteine 54, and cysteine 82 each coordinate [4Fe-4S] cluster. Mo-bis(molybdopterin guanine dinucleotide) contacts are provided by residues lysine 84, glutamine 152, asparagine 177, cysteine 181, tryptophan 214–methionine 221, methionine 422, glutamine 426, asparagine 532, lysine 580, aspartate 607, and threonine 827–serine 836. A substrate-binding site is contributed by tryptophan 903. Mo-bis(molybdopterin guanine dinucleotide)-binding residues include asparagine 911 and lysine 928.

Belongs to the prokaryotic molybdopterin-containing oxidoreductase family. NasA/NapA/NarB subfamily. As to quaternary structure, component of the periplasmic nitrate reductase NapAB complex composed of NapA and NapB. [4Fe-4S] cluster is required as a cofactor. Mo-bis(molybdopterin guanine dinucleotide) serves as cofactor. In terms of processing, predicted to be exported by the Tat system. The position of the signal peptide cleavage has not been experimentally proven.

The protein resides in the periplasm. The enzyme catalyses 2 Fe(II)-[cytochrome] + nitrate + 2 H(+) = 2 Fe(III)-[cytochrome] + nitrite + H2O. Its function is as follows. Catalytic subunit of the periplasmic nitrate reductase complex NapAB. Receives electrons from NapB and catalyzes the reduction of nitrate to nitrite. In Nautilia profundicola (strain ATCC BAA-1463 / DSM 18972 / AmH), this protein is Periplasmic nitrate reductase.